A 335-amino-acid chain; its full sequence is MASPHAENDMVPEMIDHRHLQMWKWLHSRSGARGNTSETSFESSVSVSTNSFDFSADMSRSIDSSSSRMLPSPITNFVTPSSSFSSHQMHDIYSLAASYLQAPPPPYTPTTAFHPHNAHQLLLLHNMTAAVQTPEDPDIDVVGLADTTNLVSLNDKEDEEKLDQTTESEESDRISISTTEECPLDLTFKPTSLDSPTSSTFIPLRPSVIIDHHIPKPHTSVRRSMSSVSSSASSTQEEVAAHFRRSLSGKWPKRCKVNSEEARNSPLRRRPSFNTHTSVSSLSVHSVSPTPPVTSSAQTIIVNNHCSDTTLSVADHFRRALLGKGLFDFQRKSNK.

3 disordered regions span residues 153-174 (LNDK…SDRI), 218-239 (HTSV…QEEV), and 254-295 (RCKV…PVTS). Acidic residues predominate over residues 156–170 (KEDEEKLDQTTESEE). Low complexity-rich tracts occupy residues 222–234 (RRSM…SASS) and 275–295 (THTS…PVTS).

This is an uncharacterized protein from Caenorhabditis elegans.